The sequence spans 81 residues: Conotoxin ArMKLT2-0311 (81 aa).

The N-terminal stretch at 1–22 is a signal peptide; the sequence is MKLTCVLIVALLFLTACQLTTA. A compositionally biased stretch (basic and acidic residues) spans 23–34; the sequence is DDSRDKQEDPLV. The interval 23–45 is disordered; it reads DDSRDKQEDPLVRSHRKMQKSED. Residues 23-51 constitute a propeptide that is removed on maturation; it reads DDSRDKQEDPLVRSHRKMQKSEDPKMAER. Disulfide bonds link Cys52/Cys67, Cys59/Cys71, and Cys66/Cys80.

The protein belongs to the conotoxin O1 superfamily. Expressed by the venom duct.

Its subcellular location is the secreted. This is Conotoxin ArMKLT2-0311 from Conus arenatus (Sand-dusted cone).